The sequence spans 145 residues: uncharacterized protein (145 aa).

Belongs to the methyltransferase superfamily.

Functionally, probable methyltransferase. This is an uncharacterized protein from Schizosaccharomyces pombe (strain 972 / ATCC 24843) (Fission yeast).